The primary structure comprises 53 residues: Photoreceptor disk component PRCD (53 aa).

C2 carries S-palmitoyl cysteine lipidation. The disordered stretch occupies residues 24–53; it reads PEPSRVDGTVVGSGSDTDLQSTGREKGPVK. The span at 35 to 45 shows a compositional bias: polar residues; it reads GSGSDTDLQST.

The protein belongs to the PRCD family. As to quaternary structure, interacts with RHO/rhodopsin; the interaction promotes PRCD stability. In terms of processing, palmitoylated at Cys-2. Palmitoylation is essential for protein stability and trafficking to the photoreceptor outer segment, but does not appear to be essential for membrane localization. Probably palmitoylated by ZDHHC3. Post-translationally, phosphorylated. Expressed in retina, where it localizes to both rod and cone photoreceptors (at protein level).

The protein resides in the cell projection. It is found in the cilium. It localises to the photoreceptor outer segment. The protein localises to the membrane. Its subcellular location is the endoplasmic reticulum. The protein resides in the golgi apparatus. Functionally, involved in vision. This chain is Photoreceptor disk component PRCD, found in Mus musculus (Mouse).